A 259-amino-acid chain; its full sequence is MSLHLVIIDALNLIRRVHSAQPDPNDITRTAETTTRTLQRIINEAQPSHMIAVFDHHLSDRGWRAELLPTYKANRKPMPDVLQQGIDAIQDAWWQLGIDSLLSEGDEADDLVATLACKVAAHQEKVTIISTDKGYCQLLSPTLQIRDYFQQRWLDEPFIAQEFGVTPAQLTDYWGLTGVSSSQIPGVAGIGPKAAKEILNQFSSIEEAYASPELPAKYRKKLDPHIEMARICKQVSALKTDIELGFNLQDIRFNSSSAD.

Asp-109 is a Mg(2+) binding site. The 5'-3' exonuclease domain occupies 165-255; the sequence is VTPAQLTDYW…FNLQDIRFNS (91 aa). K(+)-binding residues include Leu-176, Pro-185, Val-187, and Ile-190. The tract at residues 189 to 194 is interaction with DNA; sequence GIGPKA.

The protein belongs to the Xni family. It depends on Mg(2+) as a cofactor. The cofactor is K(+).

Has flap endonuclease activity. During DNA replication, flap endonucleases cleave the 5'-overhanging flap structure that is generated by displacement synthesis when DNA polymerase encounters the 5'-end of a downstream Okazaki fragment. The polypeptide is Flap endonuclease Xni (Vibrio cholerae serotype O1 (strain ATCC 39315 / El Tor Inaba N16961)).